The sequence spans 261 residues: 5'-nucleotidase SurE (261 aa).

Positions 8, 9, 39, and 94 each coordinate a divalent metal cation.

The protein belongs to the SurE nucleotidase family. A divalent metal cation serves as cofactor.

Its subcellular location is the cytoplasm. It catalyses the reaction a ribonucleoside 5'-phosphate + H2O = a ribonucleoside + phosphate. Its function is as follows. Nucleotidase that shows phosphatase activity on nucleoside 5'-monophosphates. The polypeptide is 5'-nucleotidase SurE (Archaeoglobus fulgidus (strain ATCC 49558 / DSM 4304 / JCM 9628 / NBRC 100126 / VC-16)).